The chain runs to 259 residues: tRNA (guanine-N(1)-)-methyltransferase (259 aa).

Residues Gly-113 and 133 to 138 contribute to the S-adenosyl-L-methionine site; that span reads IGDYVL.

This sequence belongs to the RNA methyltransferase TrmD family. Homodimer.

It is found in the cytoplasm. The enzyme catalyses guanosine(37) in tRNA + S-adenosyl-L-methionine = N(1)-methylguanosine(37) in tRNA + S-adenosyl-L-homocysteine + H(+). In terms of biological role, specifically methylates guanosine-37 in various tRNAs. In Xanthomonas oryzae pv. oryzae (strain MAFF 311018), this protein is tRNA (guanine-N(1)-)-methyltransferase.